A 443-amino-acid polypeptide reads, in one-letter code: Protein AknT (443 aa).

It belongs to the cytochrome P450 family.

Its function is as follows. Involved in the biosynthesis of the anthracycline antitumor agent aclacinomycin A. AknT is required for the glycosylation of aklavinone aglycone by AknS to yield aclacinomycin T (rhodosaminyl-aklavinone). The protein is Protein AknT of Streptomyces galilaeus.